A 348-amino-acid polypeptide reads, in one-letter code: Dihydroorotase (348 aa).

The Zn(2+) site is built by H17 and H19. Substrate-binding positions include H19–R21 and N45. Residues K103, H140, and H178 each contribute to the Zn(2+) site. K103 is modified (N6-carboxylysine). H140 serves as a coordination point for substrate. L223 serves as a coordination point for substrate. Residue D251 coordinates Zn(2+). The active site involves D251. Substrate contacts are provided by H255 and A267.

Belongs to the metallo-dependent hydrolases superfamily. DHOase family. Class II DHOase subfamily. As to quaternary structure, homodimer. Zn(2+) serves as cofactor.

The enzyme catalyses (S)-dihydroorotate + H2O = N-carbamoyl-L-aspartate + H(+). The protein operates within pyrimidine metabolism; UMP biosynthesis via de novo pathway; (S)-dihydroorotate from bicarbonate: step 3/3. Catalyzes the reversible cyclization of carbamoyl aspartate to dihydroorotate. This is Dihydroorotase from Salmonella dublin (strain CT_02021853).